Consider the following 179-residue polypeptide: Acireductone dioxygenase (179 aa).

4 residues coordinate Fe(2+): H100, H102, E106, and H145. H100, H102, E106, and H145 together coordinate Ni(2+).

The protein belongs to the acireductone dioxygenase (ARD) family. Monomer. It depends on Fe(2+) as a cofactor. Requires Ni(2+) as cofactor.

It carries out the reaction 1,2-dihydroxy-5-(methylsulfanyl)pent-1-en-3-one + O2 = 3-(methylsulfanyl)propanoate + CO + formate + 2 H(+). It catalyses the reaction 1,2-dihydroxy-5-(methylsulfanyl)pent-1-en-3-one + O2 = 4-methylsulfanyl-2-oxobutanoate + formate + 2 H(+). The protein operates within amino-acid biosynthesis; L-methionine biosynthesis via salvage pathway; L-methionine from S-methyl-5-thio-alpha-D-ribose 1-phosphate: step 5/6. In terms of biological role, catalyzes 2 different reactions between oxygen and the acireductone 1,2-dihydroxy-3-keto-5-methylthiopentene (DHK-MTPene) depending upon the metal bound in the active site. Fe-containing acireductone dioxygenase (Fe-ARD) produces formate and 2-keto-4-methylthiobutyrate (KMTB), the alpha-ketoacid precursor of methionine in the methionine recycle pathway. Ni-containing acireductone dioxygenase (Ni-ARD) produces methylthiopropionate, carbon monoxide and formate, and does not lie on the methionine recycle pathway. The chain is Acireductone dioxygenase from Bacillus licheniformis (strain ATCC 14580 / DSM 13 / JCM 2505 / CCUG 7422 / NBRC 12200 / NCIMB 9375 / NCTC 10341 / NRRL NRS-1264 / Gibson 46).